Consider the following 497-residue polypeptide: Di-/tripeptide transporter (497 aa).

The Cytoplasmic segment spans residues 1–36; it reads MQNLNKTEKTFFGQPRGLLTLFQTEFWERFSYYGMR. A helical membrane pass occupies residues 37–55; the sequence is AILVYYLYALTTADNAGLG. Over 56–64 the chain is Extracellular; sequence LPKAQAMAI. A helical transmembrane segment spans residues 65–83; sequence VSIYGALVYLSTIVGGWVA. Residues 84-92 are Cytoplasmic-facing; that stretch reads DRLLGASRT. Residues 93 to 111 traverse the membrane as a helical segment; sequence IFLGGILITLGHVALATPF. Residues 112–115 lie on the Extracellular side of the membrane; sequence GLSS. Residues 116–134 traverse the membrane as a helical segment; sequence LFVALFLIILGTGMLKPNI. Topologically, residues 135 to 154 are cytoplasmic; that stretch reads SNMVGHLYSKDDSRRDTGFN. A helical membrane pass occupies residues 155–173; sequence IFVVGINMGSLIAPLIVGT. At 174–181 the chain is on the extracellular side; sequence VGQGVNYH. A helical transmembrane segment spans residues 182-200; sequence LGFSLAAIGMIFALFAYWY. At 201–224 the chain is on the cytoplasmic side; that stretch reads GRLRHFPEIGREPSNPMDAKAKRN. The chain crosses the membrane as a helical span at residues 225 to 243; it reads FIITLTIVLIVALIGFFLI. Over 244–254 the chain is Extracellular; sequence YQASPANFINN. The helical transmembrane segment at 255 to 273 threads the bilayer; that stretch reads FINVLSIIGIVVPIIYFVM. The Cytoplasmic segment spans residues 274-293; sequence MFTSKKVESDERRKLTAYIP. Residues 294-312 traverse the membrane as a helical segment; the sequence is LFLSAIVFWAIEEQSSTII. At 313–335 the chain is on the extracellular side; the sequence is AVWGESRSNLNPTWFGFTFHIDP. A helical transmembrane segment spans residues 336 to 354; it reads SWYQLLNPLFIVLLSPIFV. Residues 355-372 are Cytoplasmic-facing; the sequence is RIWNKLGDRQPSTIVKFG. The chain crosses the membrane as a helical span at residues 373–391; sequence LGLMLTGASYLIMTLPGLL. Residues 392 to 425 are Extracellular-facing; the sequence is NGTSGRASALWLVLMFAVQMAGELLVSPVGLSVS. The helical transmembrane segment at 426-444 threads the bilayer; that stretch reads TKLAPVAFQSQMMAMWFLA. Residues 445–497 lie on the Cytoplasmic side of the membrane; it reads DSTSQAINAQITPIFKAATEVHFFAITGIIGIIVGIILLIIKKPILKLMGDVR.

This sequence belongs to the major facilitator superfamily. Proton-dependent oligopeptide transporter (POT/PTR) (TC 2.A.17) family.

It is found in the cell membrane. In terms of biological role, proton-dependent uptake of di- or tri-peptides. In Lactococcus lactis subsp. cremoris (Streptococcus cremoris), this protein is Di-/tripeptide transporter (dtpT).